A 526-amino-acid chain; its full sequence is 3',5'-cyclic-nucleotide phosphodiesterase 2 (526 aa).

The 345-residue stretch at 182–526 (RNIEFMSFLS…EYWMKHKKPQ (345 aa)) folds into the PDEase domain. Residue histidine 265 is the Proton donor of the active site. Residues histidine 269, histidine 302, aspartate 303, and aspartate 400 each coordinate a divalent metal cation.

This sequence belongs to the cyclic nucleotide phosphodiesterase family. As to quaternary structure, monomer. Requires a divalent metal cation as cofactor.

The catalysed reaction is 3',5'-cyclic AMP + H2O = AMP + H(+). In terms of biological role, controls the level of cAMP in yeast cells, together with the low-affinity cAMP phosphodiesterase (PDE1). This is 3',5'-cyclic-nucleotide phosphodiesterase 2 from Saccharomyces cerevisiae (strain ATCC 204508 / S288c) (Baker's yeast).